The following is a 327-amino-acid chain: MEGGLSAPLSVRLLLFIALPAAGWLTTNAPRPPSTAPQNGIQINVTTLSKSGEESEEQVVLNITYERGQVYVNDLPVNSGVTRISCQTLIVKSENLEKLEEKHYFGIVTVRILVLERPVTYSASSQLIVIQGEVVEIDGRQAQQKNVTEIDILVKNQRVLRYSSYFLPLEESMLYSISQDSDILFTLPDFSKKGTVSSLQTTSHYLMGNVETTVDGNALPGKLPETPLRAEPPSSYKVMCQWMEKLRKALCRFWSSVVPVLFMFLDVMVVGVLGAAGVIAVLKLLFPVCENKGILQVDKMNGISVPIILYPDGSEKTAQKLTDKTDI.

Residues 1–23 (MEGGLSAPLSVRLLLFIALPAAG) form the signal peptide. Residues 24–259 (WLTTNAPRPP…LCRFWSSVVP (236 aa)) lie on the Extracellular side of the membrane. Residues N44, N62, and N146 are each glycosylated (N-linked (GlcNAc...) asparagine). A helical membrane pass occupies residues 260–280 (VLFMFLDVMVVGVLGAAGVIA). The Cytoplasmic segment spans residues 281–327 (VLKLLFPVCENKGILQVDKMNGISVPIILYPDGSEKTAQKLTDKTDI).

It is found in the membrane. The polypeptide is Glycoprotein integral membrane protein 1 (Ginm1) (Mus musculus (Mouse)).